The primary structure comprises 338 residues: Aspartate-semialdehyde dehydrogenase (338 aa).

NADP(+) contacts are provided by residues 9-12 and 37-38; these read TGQV and RS. Arg-93 provides a ligand contact to phosphate. Cys-123 functions as the Acyl-thioester intermediate in the catalytic mechanism. Substrate is bound at residue Gln-150. Position 153–154 (153–154) interacts with NADP(+); that stretch reads SG. Lys-220 lines the phosphate pocket. Arg-242 serves as a coordination point for substrate. His-249 serves as the catalytic Proton acceptor. Position 316 (Asn-316) interacts with NADP(+).

This sequence belongs to the aspartate-semialdehyde dehydrogenase family. Homodimer.

It catalyses the reaction L-aspartate 4-semialdehyde + phosphate + NADP(+) = 4-phospho-L-aspartate + NADPH + H(+). It functions in the pathway amino-acid biosynthesis; L-lysine biosynthesis via DAP pathway; (S)-tetrahydrodipicolinate from L-aspartate: step 2/4. The protein operates within amino-acid biosynthesis; L-methionine biosynthesis via de novo pathway; L-homoserine from L-aspartate: step 2/3. It participates in amino-acid biosynthesis; L-threonine biosynthesis; L-threonine from L-aspartate: step 2/5. Catalyzes the NADPH-dependent formation of L-aspartate-semialdehyde (L-ASA) by the reductive dephosphorylation of L-aspartyl-4-phosphate. This is Aspartate-semialdehyde dehydrogenase from Streptomyces akiyoshiensis.